The chain runs to 890 residues: Calcium-transporting ATPase (890 aa).

Over 1–47 (MKFHEMGQTDLLEATNTSMKQGLTEKEVKKRLDKHGPNELQEGKKTS) the chain is Cytoplasmic. Residues 48 to 68 (ALLLFFAQFKDFMVLVLLAAT) traverse the membrane as a helical segment. Residues 69–78 (LISGFLGEYV) lie on the Extracellular side of the membrane. Residues 79-99 (DAVAIIAIVFVNGILGFFQER) form a helical membrane-spanning segment. Residues 100–238 (RAEQSLQALK…TLSTPLQRRL (139 aa)) are Cytoplasmic-facing. Residues 239–258 (EQLGKILIVVALLLTVLVVA) traverse the membrane as a helical segment. The Extracellular segment spans residues 259-270 (VGVIQGHDLYSM). A helical membrane pass occupies residues 271–288 (FLAGVSLAVAAIPEGLPA). Residues V279, A280, I282, and E284 each coordinate Ca(2+). At 289 to 688 (IVTVALSLGV…KEGRNIYENI (400 aa)) the chain is on the cytoplasmic side. The active-site 4-aspartylphosphate intermediate is the D326. Positions 633 and 637 each coordinate Mg(2+). Residues 689–708 (RKFIRYLLASNVGEILVMLF) form a helical membrane-spanning segment. 2 residues coordinate Ca(2+): N699 and E702. The Extracellular segment spans residues 709-718 (AMLLALPLPL). The chain crosses the membrane as a helical span at residues 719-739 (VPIQILWVNLVTDGLPAMALG). The Ca(2+) site is built by N727, T730, and D731. The Cytoplasmic segment spans residues 740 to 759 (MDQPEGDVMKRKPRHPKEGV). A helical transmembrane segment spans residues 760–782 (FARKLGWKVVSRGFLIGVATILA). At 783 to 798 (FIIVYHRNPENLAYAQ) the chain is on the extracellular side. A helical membrane pass occupies residues 799–818 (TIAFATLVLAQLIHVFDCRS). Residues 819-830 (ETSVFSRNPFQN) are Cytoplasmic-facing. A helical transmembrane segment spans residues 831–849 (LYLIGAVLSSILLMLVVIY). At 850 to 864 (YPPLQPIFHTVAITP) the chain is on the extracellular side. Residues 865–885 (GDWMLVIGMSAIPTFLLAGSL) traverse the membrane as a helical segment. The Cytoplasmic segment spans residues 886 to 890 (LTRKK).

This sequence belongs to the cation transport ATPase (P-type) (TC 3.A.3) family. Type IIA subfamily. Post-translationally, phosphorylated in a Ca(2+)-dependent manner starting 4 hours after shifting to sporulation medium.

It is found in the cell membrane. The catalysed reaction is Ca(2+)(in) + ATP + H2O = Ca(2+)(out) + ADP + phosphate + H(+). Functionally, this magnesium-dependent enzyme catalyzes the hydrolysis of ATP coupled with the transport of calcium. The sequence is that of Calcium-transporting ATPase (yloB) from Bacillus subtilis (strain 168).